A 408-amino-acid polypeptide reads, in one-letter code: Phosphoglycerate kinase (408 aa).

Residues 22–24 (DIN), R39, 60–63 (HQSR), R117, and R157 contribute to the substrate site. ATP-binding positions include E332 and 358–361 (GGHT).

The protein belongs to the phosphoglycerate kinase family. In terms of assembly, monomer.

It localises to the cytoplasm. It carries out the reaction (2R)-3-phosphoglycerate + ATP = (2R)-3-phospho-glyceroyl phosphate + ADP. Its pathway is carbohydrate degradation; glycolysis; pyruvate from D-glyceraldehyde 3-phosphate: step 2/5. This Thermoplasma acidophilum (strain ATCC 25905 / DSM 1728 / JCM 9062 / NBRC 15155 / AMRC-C165) protein is Phosphoglycerate kinase (pgk).